A 308-amino-acid polypeptide reads, in one-letter code: Apolipoprotein E (308 aa).

An N-terminal signal peptide occupies residues 1–18 (MKFLWAALVVTLLAGCRA). 8 consecutive repeat copies span residues 75–96 (LLIEETMKEVKAYKEELEKQVG), 97–118 (PIAQETQARLSKELQAAQARLE), 119–140 (SDMEDVRTRLAQYRSEAQAALG), 141–162 (QNTDDLQGRLASHLRKLRKRLL), 163–184 (RDAEDLQKRLAVYQAGTHEAAE), 185–206 (RGVSAIHERLGPLMMEGPLQAI), 207–224 (PPSQQLRERAEAWGQKVR), and 225–246 (GRLESVGSQARDRLDDMRDQME). The interval 75–246 (LLIEETMKEV…RLDDMRDQME (172 aa)) is 8 X 22 AA approximate tandem repeats. The segment at 153-163 (HLRKLRKRLLR) is LDL and other lipoprotein receptors binding. 157-160 (LRKR) contacts heparin. Residues 205 to 281 (AIPPSQQLRE…SWFEPLVQDM (77 aa)) are lipid-binding and lipoprotein association. Position 220-227 (220-227 (GQKVRGRL)) interacts with heparin. The segment at 257-308 (SQVRLQAEAFQTRLKSWFEPLVQDMQRQWASLVEKVQSTLGISPSTKPSKTK) is homooligomerization. The specificity for association with VLDL stretch occupies residues 269–281 (RLKSWFEPLVQDM).

Belongs to the apolipoprotein A1/A4/E family. As to quaternary structure, homotetramer. May interact with ABCA1; functionally associated with ABCA1 in the biogenesis of HDLs. May interact with APP/A4 amyloid-beta peptide; the interaction is extremely stable in vitro but its physiological significance is unclear. May interact with MAPT. May interact with MAP2. In the cerebrospinal fluid, interacts with secreted SORL1. Interacts with PMEL; this allows the loading of PMEL luminal fragment on ILVs to induce fibril nucleation. APOE exists as multiple glycosylated and sialylated glycoforms within cells and in plasma. The extent of glycosylation and sialylation are tissue and context specific. In terms of processing, glycated in plasma VLDL. Post-translationally, phosphorylated by FAM20C in the extracellular medium.

Its subcellular location is the secreted. It localises to the extracellular space. The protein resides in the extracellular matrix. The protein localises to the extracellular vesicle. It is found in the endosome. Its subcellular location is the multivesicular body. Functionally, APOE is an apolipoprotein, a protein associating with lipid particles, that mainly functions in lipoprotein-mediated lipid transport between organs via the plasma and interstitial fluids. APOE is a core component of plasma lipoproteins and is involved in their production, conversion and clearance. Apolipoproteins are amphipathic molecules that interact both with lipids of the lipoprotein particle core and the aqueous environment of the plasma. As such, APOE associates with chylomicrons, chylomicron remnants, very low density lipoproteins (VLDL) and intermediate density lipoproteins (IDL) but shows a preferential binding to high-density lipoproteins (HDL). It also binds a wide range of cellular receptors including the LDL receptor/LDLR and the very low-density lipoprotein receptor/VLDLR that mediate the cellular uptake of the APOE-containing lipoprotein particles. Finally, APOE also has a heparin-binding activity and binds heparan-sulfate proteoglycans on the surface of cells, a property that supports the capture and the receptor-mediated uptake of APOE-containing lipoproteins by cells. The protein is Apolipoprotein E (APOE) of Pteropus pselaphon (Bonin flying fox).